The chain runs to 894 residues: Probable cytoplasmic aconitate hydratase (894 aa).

Residues Gln87 and 207–209 contribute to the substrate site; that span reads DSH. 3 residues coordinate [4Fe-4S] cluster: Cys438, Cys504, and Cys507. Substrate-binding positions include Arg537, Arg542, and 781–782; that span reads SR.

This sequence belongs to the aconitase/IPM isomerase family. The cofactor is [4Fe-4S] cluster.

Its subcellular location is the cytoplasm. The protein resides in the cytosol. The enzyme catalyses citrate = D-threo-isocitrate. Its function is as follows. Catalyzes the isomerization of citrate to isocitrate via cis-aconitate. The polypeptide is Probable cytoplasmic aconitate hydratase (aco1) (Dictyostelium discoideum (Social amoeba)).